The following is a 43-amino-acid chain: Protein AimP (43 aa).

The first 30 residues, 1 to 30, serve as a signal peptide directing secretion; sequence MKKVFFGLVILTALAISFVAGQQSVSTASA.

Interacts with the viral AimR transcriptional regulator; this interaction changes the oligomeric state of AimR from an active dimer to an inactive monomer leading to lysogeny. Post-translationally, cleaved by host extracellular proteases, thereby releasing the mature arbitrium peptide.

The protein localises to the secreted. Its function is as follows. Part of the latency-replication switch system which decides at the onset of infection whether to replicate and lyse the host or to lysogenize (latency) and keep the host viable. Peptide which is released by the infected host bacteria and acts as a communication agent that affects the latency versus replication (lysogeny-lysis) decision for any new infecting virus from the same specie. High concentration of arbitrium peptide results in increased lysogeny in the upcoming viruses. The arbitrium peptide is secreted by infected bacteria and, after several cycles of infection, accumulates in the extracellular medium. When a virus from the same specie subsequently infects an uninfected bacterium which has internalized the peptide via its OPP transporter, the peptide will binds to the viral AimR transcriptional regulator and prevents AimR transcriptional activation of the aimX locus. Inhibition of aimX transcription promotes lysogeny. The sequence is that of Protein AimP (aimP) from Bacillus phage phi3T (Bacteriophage phi-3T).